Here is a 192-residue protein sequence, read N- to C-terminus: MSEYLLLLISTVLVNNFVLVKFLGLCPFMGVSSKLESAIGMSMATTFVLTLASILSYLVNQYLLLPFDLSYLRTMSFILVIAVVVQFTEMVVQKTSASLHRALGIYLPLITTNCAVLGVALLNVNEKHDFIQSAIYGFGAAVGFSLVLILFSAMRERLAAADVPMPFKGGAIAMITAGLMSLAFMGFTGLVK.

The next 6 membrane-spanning stretches (helical) occupy residues 5–25 (LLLLISTVLVNNFVLVKFLGL), 39–59 (IGMSMATTFVLTLASILSYLV), 65–85 (LPFDLSYLRTMSFILVIAVVV), 102–122 (ALGIYLPLITTNCAVLGVALL), 134–154 (AIYGFGAAVGFSLVLILFSAM), and 171–191 (AIAMITAGLMSLAFMGFTGLV).

The protein belongs to the NqrDE/RnfAE family. As to quaternary structure, the complex is composed of six subunits: RnfA, RnfB, RnfC, RnfD, RnfE and RnfG.

Its subcellular location is the cell inner membrane. Its function is as follows. Part of a membrane-bound complex that couples electron transfer with translocation of ions across the membrane. The protein is Ion-translocating oxidoreductase complex subunit A of Shewanella sp. (strain ANA-3).